Here is a 593-residue protein sequence, read N- to C-terminus: Capsid protein 1 (593 aa).

Belongs to the NCLDV major capsid protein family.

Its subcellular location is the virion. This is Capsid protein 1 from Acanthamoeba polyphaga mimivirus (APMV).